Consider the following 546-residue polypeptide: CTP synthase (546 aa).

The tract at residues Met-1–Ile-266 is amidoligase domain. Ser-14 provides a ligand contact to CTP. Residue Ser-14 participates in UTP binding. Residues Ser-15–Ile-20 and Asp-72 each bind ATP. Residues Asp-72 and Glu-140 each coordinate Mg(2+). CTP-binding positions include Asp-147–Glu-149, Lys-187–Gln-192, and Lys-223. Residues Lys-187 to Gln-192 and Lys-223 each bind UTP. Residue Lys-239–Val-241 participates in ATP binding. The 252-residue stretch at Val-291–Gly-542 folds into the Glutamine amidotransferase type-1 domain. Gly-352 is an L-glutamine binding site. The Nucleophile; for glutamine hydrolysis role is filled by Cys-379. L-glutamine-binding positions include Leu-380–Gln-383, Glu-403, and Arg-470. Active-site residues include His-515 and Glu-517.

This sequence belongs to the CTP synthase family. Homotetramer.

It catalyses the reaction UTP + L-glutamine + ATP + H2O = CTP + L-glutamate + ADP + phosphate + 2 H(+). The catalysed reaction is L-glutamine + H2O = L-glutamate + NH4(+). It carries out the reaction UTP + NH4(+) + ATP = CTP + ADP + phosphate + 2 H(+). It participates in pyrimidine metabolism; CTP biosynthesis via de novo pathway; CTP from UDP: step 2/2. With respect to regulation, allosterically activated by GTP, when glutamine is the substrate; GTP has no effect on the reaction when ammonia is the substrate. The allosteric effector GTP functions by stabilizing the protein conformation that binds the tetrahedral intermediate(s) formed during glutamine hydrolysis. Inhibited by the product CTP, via allosteric rather than competitive inhibition. In terms of biological role, catalyzes the ATP-dependent amination of UTP to CTP with either L-glutamine or ammonia as the source of nitrogen. Regulates intracellular CTP levels through interactions with the four ribonucleotide triphosphates. The polypeptide is CTP synthase (Aliivibrio fischeri (strain MJ11) (Vibrio fischeri)).